The following is a 622-amino-acid chain: UvrABC system protein C (622 aa).

The 80-residue stretch at 13–92 (EKPGVYLMKN…IKKYRPKYNI (80 aa)) folds into the GIY-YIG domain. Positions 204–239 (KDILDKLKNQMEEASNSLQFEKAASLRDKIFAVKKI) constitute a UVR domain.

The protein belongs to the UvrC family. As to quaternary structure, interacts with UvrB in an incision complex.

It localises to the cytoplasm. The UvrABC repair system catalyzes the recognition and processing of DNA lesions. UvrC both incises the 5' and 3' sides of the lesion. The N-terminal half is responsible for the 3' incision and the C-terminal half is responsible for the 5' incision. In Clostridium tetani (strain Massachusetts / E88), this protein is UvrABC system protein C.